Here is a 187-residue protein sequence, read N- to C-terminus: Protein lethal(2)essential for life (187 aa).

The region spanning 61–170 (NSLQKQESGS…TERLVQITQT (110 aa)) is the sHSP domain. The interval 151–187 (APMKALPPPQTERLVQITQTGPSSKEDNAKKVETSTA) is disordered. Over residues 174-187 (SKEDNAKKVETSTA) the composition is skewed to basic and acidic residues.

It belongs to the small heat shock protein (HSP20) family. As to expression, ubiquitously expressed during embryogenesis with no sign of tissue specificity in expression up to stage 16.

Vital role in embryonic development. In Drosophila melanogaster (Fruit fly), this protein is Protein lethal(2)essential for life (l(2)efl).